Reading from the N-terminus, the 118-residue chain is Ribonuclease P protein component 4 (118 aa).

4 residues coordinate Zn(2+): cysteine 59, cysteine 62, cysteine 85, and cysteine 88.

It belongs to the eukaryotic/archaeal RNase P protein component 4 family. Consists of a catalytic RNA component and at least 4-5 protein subunits. It depends on Zn(2+) as a cofactor.

The protein resides in the cytoplasm. The catalysed reaction is Endonucleolytic cleavage of RNA, removing 5'-extranucleotides from tRNA precursor.. In terms of biological role, part of ribonuclease P, a protein complex that generates mature tRNA molecules by cleaving their 5'-ends. The sequence is that of Ribonuclease P protein component 4 from Sulfolobus acidocaldarius (strain ATCC 33909 / DSM 639 / JCM 8929 / NBRC 15157 / NCIMB 11770).